The sequence spans 212 residues: Large ribosomal subunit protein uL3 (212 aa).

The segment at 136-155 is disordered; the sequence is THGNSLSHRSNGSIGQNQTP. N5-methylglutamine is present on Gln-153.

Belongs to the universal ribosomal protein uL3 family. Part of the 50S ribosomal subunit. Forms a cluster with proteins L14 and L19. Post-translationally, methylated by PrmB.

One of the primary rRNA binding proteins, it binds directly near the 3'-end of the 23S rRNA, where it nucleates assembly of the 50S subunit. This Shewanella baltica (strain OS223) protein is Large ribosomal subunit protein uL3.